The sequence spans 598 residues: Elongation factor 4 (598 aa).

The region spanning 2–184 (DNVRNFAIIA…AIITKLPAPQ (183 aa)) is the tr-type G domain. GTP-binding positions include 14 to 19 (DHGKST) and 131 to 134 (NKVD).

This sequence belongs to the TRAFAC class translation factor GTPase superfamily. Classic translation factor GTPase family. LepA subfamily.

It is found in the cell membrane. The catalysed reaction is GTP + H2O = GDP + phosphate + H(+). In terms of biological role, required for accurate and efficient protein synthesis under certain stress conditions. May act as a fidelity factor of the translation reaction, by catalyzing a one-codon backward translocation of tRNAs on improperly translocated ribosomes. Back-translocation proceeds from a post-translocation (POST) complex to a pre-translocation (PRE) complex, thus giving elongation factor G a second chance to translocate the tRNAs correctly. Binds to ribosomes in a GTP-dependent manner. This Wolbachia sp. subsp. Brugia malayi (strain TRS) protein is Elongation factor 4.